The sequence spans 367 residues: Cytochrome b (367 aa).

Helical transmembrane passes span 20–40 (MGSI…LLSM), 64–85 (WFLR…YAHI), 101–121 (WMVG…GYVL), and 166–186 (FFSL…LHII). Residues His-70 and His-84 each contribute to the heme b site. The heme b site is built by His-170 and His-184. His-189 contacts a ubiquinone. 4 helical membrane-spanning segments follow: residues 214–234 (IKDS…TFFS), 276–296 (LGGV…PLSS), 308–328 (IYQV…WLGA), and 335–355 (YLSL…LLGM).

The protein belongs to the cytochrome b family. In terms of assembly, the main subunits of complex b-c1 are: cytochrome b, cytochrome c1 and the Rieske protein. Requires heme b as cofactor.

The protein resides in the mitochondrion inner membrane. In terms of biological role, component of the ubiquinol-cytochrome c reductase complex (complex III or cytochrome b-c1 complex) that is part of the mitochondrial respiratory chain. The b-c1 complex mediates electron transfer from ubiquinol to cytochrome c. Contributes to the generation of a proton gradient across the mitochondrial membrane that is then used for ATP synthesis. This chain is Cytochrome b (MT-CYB), found in Albinaria caerulea (Land snail).